Consider the following 490-residue polypeptide: Cytochrome P450 71B28 (490 aa).

A helical membrane pass occupies residues 1–21; the sequence is MSVFLCFLCLLPLILIFLKNL. Position 440 (Cys-440) interacts with heme.

It belongs to the cytochrome P450 family. The cofactor is heme.

The protein resides in the membrane. This Arabidopsis thaliana (Mouse-ear cress) protein is Cytochrome P450 71B28 (CYP71B28).